Here is a 39-residue protein sequence, read N- to C-terminus: ORF8a protein (39 aa).

Positions Met-1–Cys-15 are cleaved as a signal peptide. The region spanning Ile-16–His-39 is the SARS ORF8 Ig-like domain.

This Homo sapiens (Human) protein is ORF8a protein.